Consider the following 191-residue polypeptide: Orotate phosphoribosyltransferase (191 aa).

114-122 (EDVVTTGKS) contributes to the 5-phospho-alpha-D-ribose 1-diphosphate binding site. Orotate-binding residues include threonine 118 and arginine 146.

The protein belongs to the purine/pyrimidine phosphoribosyltransferase family. PyrE subfamily. As to quaternary structure, homodimer. It depends on Mg(2+) as a cofactor.

The catalysed reaction is orotidine 5'-phosphate + diphosphate = orotate + 5-phospho-alpha-D-ribose 1-diphosphate. The protein operates within pyrimidine metabolism; UMP biosynthesis via de novo pathway; UMP from orotate: step 1/2. Catalyzes the transfer of a ribosyl phosphate group from 5-phosphoribose 1-diphosphate to orotate, leading to the formation of orotidine monophosphate (OMP). This is Orotate phosphoribosyltransferase from Clostridium botulinum (strain Langeland / NCTC 10281 / Type F).